A 227-amino-acid chain; its full sequence is Flagellar L-ring protein 2 (227 aa).

The N-terminal stretch at 1–17 is a signal peptide; it reads MKSKLAITMVSALLLAA. A lipid anchor (N-palmitoyl cysteine) is attached at cysteine 18. Cysteine 18 is lipidated: S-diacylglycerol cysteine.

The protein belongs to the FlgH family. As to quaternary structure, the basal body constitutes a major portion of the flagellar organelle and consists of four rings (L,P,S, and M) mounted on a central rod.

The protein resides in the cell outer membrane. Its subcellular location is the bacterial flagellum basal body. Its function is as follows. Assembles around the rod to form the L-ring and probably protects the motor/basal body from shearing forces during rotation. This is Flagellar L-ring protein 2 from Chromobacterium violaceum (strain ATCC 12472 / DSM 30191 / JCM 1249 / CCUG 213 / NBRC 12614 / NCIMB 9131 / NCTC 9757 / MK).